Reading from the N-terminus, the 246-residue chain is Putative KilA-N domain-containing protein L33 (246 aa).

The KilA-N domain maps to 20-129; the sequence is RYTKCQYCDI…AKVSLWIEEW (110 aa).

This chain is Putative KilA-N domain-containing protein L33, found in Acanthamoeba polyphaga mimivirus (APMV).